Here is a 423-residue protein sequence, read N- to C-terminus: UDP-N-acetylglucosamine 1-carboxyvinyltransferase 2 (423 aa).

23–24 contributes to the phosphoenolpyruvate binding site; sequence KN. Arg93 is a binding site for UDP-N-acetyl-alpha-D-glucosamine. Residue Cys117 is the Proton donor of the active site. At Cys117 the chain carries 2-(S-cysteinyl)pyruvic acid O-phosphothioketal. UDP-N-acetyl-alpha-D-glucosamine is bound by residues 122–126, Asp305, and Ile327; that span reads RPIDQ.

This sequence belongs to the EPSP synthase family. MurA subfamily.

The protein localises to the cytoplasm. It catalyses the reaction phosphoenolpyruvate + UDP-N-acetyl-alpha-D-glucosamine = UDP-N-acetyl-3-O-(1-carboxyvinyl)-alpha-D-glucosamine + phosphate. Its pathway is cell wall biogenesis; peptidoglycan biosynthesis. Cell wall formation. Adds enolpyruvyl to UDP-N-acetylglucosamine. The polypeptide is UDP-N-acetylglucosamine 1-carboxyvinyltransferase 2 (Listeria monocytogenes serovar 1/2a (strain ATCC BAA-679 / EGD-e)).